Here is a 525-residue protein sequence, read N- to C-terminus: Lymphocyte activation gene 3 protein (525 aa).

Positions 1–22 (MWEAQFLGLLFLQPLWVAPVKP) are cleaved as a signal peptide. Topologically, residues 23 to 450 (LQPGAEVPVV…APGALPAGHL (428 aa)) are extracellular. In terms of domain architecture, Ig-like V-type spans 37-167 (GAPAQLPCSP…LSCRLRLRLG (131 aa)). The segment at 37–252 (GAPAQLPCSP…LTYRDGFNVS (216 aa)) is interaction with FGL1. The cysteines at positions 44 and 160 are disulfide-linked. The segment at 62-97 (TWQHQPDSGPPAAAPGHPLAPGPHPAAPSSWGPRPR) is disordered. Pro residues predominate over residues 69-87 (SGPPAAAPGHPLAPGPHPA). The 85-residue stretch at 168 to 252 (QASMTASPPG…LTYRDGFNVS (85 aa)) folds into the Ig-like C2-type 1 domain. N188 carries N-linked (GlcNAc...) asparagine glycosylation. C189 and C241 are oxidised to a cystine. N-linked (GlcNAc...) asparagine glycosylation is found at N250 and N256. 2 Ig-like C2-type domains span residues 265-343 (PTPL…QQLN) and 348-419 (LAII…QGER). C282 and C333 are joined by a disulfide. N343 is a glycosylation site (N-linked (GlcNAc...) asparagine). C369 and C412 form a disulfide bridge. Residues 429 to 450 (ELSSPGAQRSGRAPGALPAGHL) are connecting peptide. A helical transmembrane segment spans residues 451–471 (LLFLILGVLSLLLLVTGAFGF). Residues 472 to 525 (HLWRRQWRPRRFSALEQGIHPPQAQSKIEELEQEPEPEPEPEPEPEPEPEPEQL) lie on the Cytoplasmic side of the membrane. Positions 487 to 525 (EQGIHPPQAQSKIEELEQEPEPEPEPEPEPEPEPEPEQL) are disordered. The KIEELE motif signature appears at 498–503 (KIEELE). The 12 X 2 AA tandem repeats of E-X stretch occupies residues 501 to 524 (ELEQEPEPEPEPEPEPEPEPEPEQ). The span at 502–525 (LEQEPEPEPEPEPEPEPEPEPEQL) shows a compositional bias: acidic residues.

It belongs to the LAG3 family. Interacts with MHC class II (MHC-II); selectively recognizes stable complexes of peptide and MHC-II. Interacts with FGL1 (via the Fibrinogen C-terminal domain). Proteolytically cleaved by ADAM10 and ADAM17 within the connecting peptide region, leading to release of Secreted lymphocyte activation gene 3 protein (sLAG-3). ADAM10 mediates constitutive cleavage, but cleavage increases following T-cell activation, whereas shedding by ADAM17 is induced by TCR signaling in a PRKCQ-dependent manner. As to expression, primarily expressed in activated T-cells and a subset of natural killer (NK) cells.

It is found in the cell membrane. It localises to the secreted. Lymphocyte activation gene 3 protein: Inhibitory receptor on antigen activated T-cells. Delivers inhibitory signals upon binding to ligands, such as FGL1. FGL1 constitutes a major ligand of LAG3 and is responsible for LAG3 T-cell inhibitory function. Following TCR engagement, LAG3 associates with CD3-TCR in the immunological synapse and directly inhibits T-cell activation. May inhibit antigen-specific T-cell activation in synergy with PDCD1/PD-1, possibly by acting as a coreceptor for PDCD1/PD-1. Negatively regulates the proliferation, activation, effector function and homeostasis of both CD8(+) and CD4(+) T-cells. Also mediates immune tolerance: constitutively expressed on a subset of regulatory T-cells (Tregs) and contributes to their suppressive function. Also acts as a negative regulator of plasmacytoid dendritic cell (pDCs) activation. Binds MHC class II (MHC-II); the precise role of MHC-II-binding is however unclear. In terms of biological role, may function as a ligand for MHC class II (MHC-II) on antigen-presenting cells (APC), promoting APC activation/maturation and driving Th1 immune response. The polypeptide is Lymphocyte activation gene 3 protein (Homo sapiens (Human)).